The primary structure comprises 266 residues: Cytosolic Fe-S cluster assembly factor Nubp2 homolog (266 aa).

Gly-14–Ser-21 serves as a coordination point for ATP. [4Fe-4S] cluster-binding residues include Cys-188 and Cys-191.

The protein belongs to the Mrp/NBP35 ATP-binding proteins family. Nubp2/CFD1 subfamily. As to quaternary structure, heterotetramer of 2 Nubp1 and 2 Nubp2 chains. Requires [4Fe-4S] cluster as cofactor.

It is found in the cytoplasm. Functionally, component of the cytosolic iron-sulfur (Fe/S) protein assembly (CIA) machinery. Required for maturation of extramitochondrial Fe-S proteins. The Nubp1-Nubp2 heterotetramer forms a Fe-S scaffold complex, mediating the de novo assembly of an Fe-S cluster and its transfer to target apoproteins. This chain is Cytosolic Fe-S cluster assembly factor Nubp2 homolog, found in Drosophila virilis (Fruit fly).